We begin with the raw amino-acid sequence, 227 residues long: ATP synthase F(0) complex subunit a (227 aa).

Transmembrane regions (helical) follow at residues 9-29 (FASP…LPWV), 69-89 (WALL…LGLL), 98-118 (QLSL…IIGM), 132-152 (EGTP…SLFI), 165-185 (LTAG…LMPM), and 190-210 (AILT…VAMI).

It belongs to the ATPase A chain family. In terms of assembly, component of the ATP synthase complex composed at least of ATP5F1A/subunit alpha, ATP5F1B/subunit beta, ATP5MC1/subunit c (homooctomer), MT-ATP6/subunit a, MT-ATP8/subunit 8, ATP5ME/subunit e, ATP5MF/subunit f, ATP5MG/subunit g, ATP5MK/subunit k, ATP5MJ/subunit j, ATP5F1C/subunit gamma, ATP5F1D/subunit delta, ATP5F1E/subunit epsilon, ATP5PF/subunit F6, ATP5PB/subunit b, ATP5PD/subunit d, ATP5PO/subunit OSCP. ATP synthase complex consists of a soluble F(1) head domain (subunits alpha(3) and beta(3)) - the catalytic core - and a membrane F(0) domain - the membrane proton channel (subunits c, a, 8, e, f, g, k and j). These two domains are linked by a central stalk (subunits gamma, delta, and epsilon) rotating inside the F1 region and a stationary peripheral stalk (subunits F6, b, d, and OSCP). Interacts with DNAJC30; interaction is direct.

It localises to the mitochondrion inner membrane. It carries out the reaction H(+)(in) = H(+)(out). Its function is as follows. Subunit a, of the mitochondrial membrane ATP synthase complex (F(1)F(0) ATP synthase or Complex V) that produces ATP from ADP in the presence of a proton gradient across the membrane which is generated by electron transport complexes of the respiratory chain. ATP synthase complex consist of a soluble F(1) head domain - the catalytic core - and a membrane F(1) domain - the membrane proton channel. These two domains are linked by a central stalk rotating inside the F(1) region and a stationary peripheral stalk. During catalysis, ATP synthesis in the catalytic domain of F(1) is coupled via a rotary mechanism of the central stalk subunits to proton translocation. With the subunit c (ATP5MC1), forms the proton-conducting channel in the F(0) domain, that contains two crucial half-channels (inlet and outlet) that facilitate proton movement from the mitochondrial intermembrane space (IMS) into the matrix. Protons are taken up via the inlet half-channel and released through the outlet half-channel, following a Grotthuss mechanism. This Carassius auratus (Goldfish) protein is ATP synthase F(0) complex subunit a.